The chain runs to 202 residues: Small ribosomal subunit protein uS4 (202 aa).

Residues 1–13 (MSRYRGPRLRITR) are compositionally biased toward basic residues. Positions 1 to 43 (MSRYRGPRLRITRRLGDLPGLTRKAAKRSHPPGQHGQARRKRS) are disordered. In terms of domain architecture, S4 RNA-binding spans 90–152 (NRLDNVCFRL…KASKQLAQAN (63 aa)).

It belongs to the universal ribosomal protein uS4 family. In terms of assembly, part of the 30S ribosomal subunit. Contacts protein S5. The interaction surface between S4 and S5 is involved in control of translational fidelity.

In terms of biological role, one of the primary rRNA binding proteins, it binds directly to 16S rRNA where it nucleates assembly of the body of the 30S subunit. Its function is as follows. With S5 and S12 plays an important role in translational accuracy. In Prochlorococcus marinus (strain NATL2A), this protein is Small ribosomal subunit protein uS4.